A 251-amino-acid polypeptide reads, in one-letter code: Flap endonuclease Xni (251 aa).

Residue Asp-104 participates in Mg(2+) binding. The 91-residue stretch at Val-160–Lys-250 folds into the 5'-3' exonuclease domain. 5 residues coordinate K(+): Leu-171, Ala-172, Pro-180, Val-182, and Val-185. An interaction with DNA region spans residues Gly-184 to Thr-189.

The protein belongs to the Xni family. Mg(2+) serves as cofactor. K(+) is required as a cofactor.

Functionally, has flap endonuclease activity. During DNA replication, flap endonucleases cleave the 5'-overhanging flap structure that is generated by displacement synthesis when DNA polymerase encounters the 5'-end of a downstream Okazaki fragment. The sequence is that of Flap endonuclease Xni from Yersinia pestis bv. Antiqua (strain Nepal516).